Here is a 42-residue protein sequence, read N- to C-terminus: DRDSCIDKSRCSKYGYYQECQDCCKKAGHNGGTCMFFKCKCA.

Intrachain disulfides connect cysteine 5–cysteine 23, cysteine 11–cysteine 34, cysteine 20–cysteine 39, and cysteine 24–cysteine 41.

The protein belongs to the ergtoxin family. Gamma-KTx 1 subfamily. In terms of tissue distribution, expressed by the venom gland.

The protein resides in the secreted. Blocks in a reversible manner human and rat Kv11.1/KCNH2/ERG1 potassium channels. Also completely and irreversibly blocks rat Kv11.2/KCNH6/ERG2 and human Kv11.3/KCNH7/ERG3 channels. Also weakly inhibits Kir2.1/KCNJ2 and Kv1.2/KCNA2 potassium channels. The sequence is that of Potassium channel toxin gamma-KTx 1.8 from Centruroides elegans (Bark scorpion).